Reading from the N-terminus, the 1050-residue chain is MDSPSAPVPAHKLVDRLKDQTPRHPSPQPTHVSYPKVNGNGHRVLRSATVGYVAPVFQGKAEQMKQVKNIIVQGGWIPETLVDGQIAWFYNELGIDDVYFQLENPQAVANHITSLYAAKVAAFSREDKREEIRLDMEASDHAIYIDTSEPGMTSFDGPRYEHRLESKYLDGDDTSKRFRVETFRSPGVLGQKENSKAALRCYFVYQCLFVDSNADPKETRLEVISDRMFLAKATKNTKQIYQDIIQVAVSRHGPVIEVFDIEGSEEMRLVVAFRSRTAKGIFSALSDLYHYYGVTSSRKYVEQFSNGITVMSIYLRPAANIDGKHPPLEQSIHQITKEISLLYCLPQNKFHNMFASGELSLQETIYAHCVWVFVQHFLNRLGTEYTSLIAALDPKNNSHVEILSKMKKRLRTETFTPDYILEIISSHPQLVRALYASFASVHLRVGSDYDRHLIAPTPVMEVLSDARLKEKITKDVSNEHEEMVMTAFRVFNNAVLKTNFFTPTKVALSFRLNPSFLPEVEYPKPLYGMFLVITSESRGFHLRFKDIARGGIRIVKSRSKEAYQINARNLFDENYGLASTQQRKNKDIPEGGSKGVILLDPKQQDRHREAFEKYIDSILDLLLKAETPGIKNPIVDLYGKEEILFMGPDENTADLVDWATEHARARGAPWWKSFFTGKSPRLGGIPHDSYGMTTLSVREYVKGIYRKLELDPSKIRKMQTGGPDGDLGSNEILLSNETYTAIVDGSGVLCDPNGIDKDELRRLAKARAMISNFDIAKLSKDGYRVLCDDTNVTLPNGEVVHNGTAFRNTYHLRDNGITDMFVPCGGRPESIDLSSVNKLIKDGKSTIPYIVEGANLFITQDAKLRLEEAGCIVYKDASANKGGVTSSSLEVLASLSFDDKGFVTHMCHDSRGNAPEFYQAYVKEVQNKIQDNARLEFEAIWREHEQTGLPRSVLSDKLSLAITSLDEDLQRSELWDNEKIRRSVLADALPNLLINKIGLDTIIERVPDSYLRAIFGSYLASRFVYEFGSSPSQFAFYDFMSKRMGNINKE.

Residues 1 to 39 (MDSPSAPVPAHKLVDRLKDQTPRHPSPQPTHVSYPKVNG) are disordered. The span at 12–22 (KLVDRLKDQTP) shows a compositional bias: basic and acidic residues. Lys594 is an active-site residue.

The protein belongs to the Glu/Leu/Phe/Val dehydrogenases family. Homotetramer.

The catalysed reaction is L-glutamate + NAD(+) + H2O = 2-oxoglutarate + NH4(+) + NADH + H(+). The polypeptide is NAD-specific glutamate dehydrogenase (gdh-1) (Neurospora crassa (strain ATCC 24698 / 74-OR23-1A / CBS 708.71 / DSM 1257 / FGSC 987)).